The following is a 351-amino-acid chain: tRNA-specific 2-thiouridylase MnmA (351 aa).

An ATP-binding site is contributed by 6 to 13; the sequence is ALSGGTDS. Cys96 functions as the Nucleophile in the catalytic mechanism. A disulfide bridge connects residues Cys96 and Cys193. An ATP-binding site is contributed by Gly120. Residues 143 to 145 are interaction with tRNA; it reads KDQ. Cys193 (cysteine persulfide intermediate) is an active-site residue. An interaction with tRNA region spans residues 298–299; it reads RY.

This sequence belongs to the MnmA/TRMU family.

The protein resides in the cytoplasm. The catalysed reaction is S-sulfanyl-L-cysteinyl-[protein] + uridine(34) in tRNA + AH2 + ATP = 2-thiouridine(34) in tRNA + L-cysteinyl-[protein] + A + AMP + diphosphate + H(+). Catalyzes the 2-thiolation of uridine at the wobble position (U34) of tRNA, leading to the formation of s(2)U34. The chain is tRNA-specific 2-thiouridylase MnmA from Nitratidesulfovibrio vulgaris (strain DSM 19637 / Miyazaki F) (Desulfovibrio vulgaris).